We begin with the raw amino-acid sequence, 622 residues long: Low affinity potassium transport system protein Kup (622 aa).

Helical transmembrane passes span 9 to 29 (LPAITLAAIGVVYGDIGTSPL), 49 to 69 (VFGFLSLIFWLLIFVVSIKYL), 103 to 123 (VIMGLIGGSFFYGEVVITPAI), 137 to 157 (PQLDTWIVPLSIIVLTLLFMI), 165 to 185 (VGKLFAPIMLTWFLILAVLGL), 213 to 233 (VSFIALGAVVLSITGVEALYA), 247 to 267 (WFTVVLPSLVLNYFGQGALLL), 276 to 296 (PFFLLAPDWALIPLLILAALA), 337 to 357 (IYIPFVNWLLYFAVVVVIVSF), 363 to 383 (LAAAYGIAVTGTMVLTSILST), 396 to 416 (FVALILIAFLCVDIPLFSANL), and 419 to 439 (LLSGGWLPLSLGLIMFTIMTT).

The protein belongs to the HAK/KUP transporter (TC 2.A.72) family.

It localises to the cell inner membrane. It carries out the reaction K(+)(in) + H(+)(in) = K(+)(out) + H(+)(out). Its function is as follows. Responsible for the low-affinity transport of potassium into the cell. Likely operates as a K(+):H(+) symporter. This Salmonella typhi protein is Low affinity potassium transport system protein Kup.